Here is a 284-residue protein sequence, read N- to C-terminus: MASGARYAGKVVVVTGAARGIGAGIARAFVDSGAQVVICDKDERGGRALEQELRGAVFIRCDVTREEDVRALLSDTVHRFGRLDCVVNNAGSHPPLQPLEETTAQGFRELLELNLLGTYTLCKLAFPHLRRSRGNIINISTLVGAVGQLQGVPYAATKGAVTALTKALALDESQYGVRVNCISPGNIWTPLWQELAALAPDPRAAIREGAMAQPLGRMGQPAEVGAAAVFLASEASFCTGLELFVTGGAELGSGPENFFRSLGLCVVPEDVPPPTSRPRICSYK.

12 residues coordinate NAD(+): R19, I21, D40, K41, D62, V63, N89, Y154, K158, I187, T189, and L191.

It belongs to the short-chain dehydrogenases/reductases (SDR) family.

It carries out the reaction L-fucose + NAD(+) = L-fucono-1,5-lactone + NADH + H(+). It catalyses the reaction D-arabinose + NAD(+) = D-arabinono-1,5-lactone + NADH + H(+). The catalysed reaction is L-galactose + NAD(+) = L-galactono-1,5-lactone + NADH + H(+). The protein operates within carbohydrate degradation; L-fucose degradation. Catalyzes the NAD(+)-dependent oxidation of L-fucose, yielding L-fucono-1,5-lactone, which rapidly converts spontaneously to L-fucone-1,4-lactone. Can also act on D-arabinose and L-galactose, with lower catalytic efficiency. Does not use NADPH. May be the initial enzyme of the putative L-fucose degradation pathway in mammals. The polypeptide is L-fucose dehydrogenase (HSD17B14) (Oryctolagus cuniculus (Rabbit)).